Here is a 239-residue protein sequence, read N- to C-terminus: NAD-dependent protein deacylase (239 aa).

One can recognise a Deacetylase sirtuin-type domain in the interval 1 to 234; sequence MENLNIVTLT…KKVYDYLREK (234 aa). NAD(+)-binding positions include 11 to 30 and 89 to 92; these read GAGI…DGLW and QNVD. H107 acts as the Proton acceptor in catalysis. Zn(2+)-binding residues include C115, C118, C136, and C139. NAD(+) contacts are provided by residues 176 to 178, 202 to 204, and A220; these read GTS and NPE.

Belongs to the sirtuin family. Class III subfamily. The cofactor is Zn(2+).

The protein resides in the cytoplasm. It carries out the reaction N(6)-acetyl-L-lysyl-[protein] + NAD(+) + H2O = 2''-O-acetyl-ADP-D-ribose + nicotinamide + L-lysyl-[protein]. NAD-dependent protein deacetylase which modulates the activities of several proteins which are inactive in their acetylated form. This is NAD-dependent protein deacylase from Aquifex aeolicus (strain VF5).